The following is a 122-amino-acid chain: MAPQKDRKPKRSTWRFNLDLTHPVEDGIFDSGNFEQFLREKVKVNGKTGNLGNVVHIERFKNKITVVSEKQFSKRYLKYLTKKYLKKNNLRDWLRVVASDKETYELRYFQISQDEDESESED.

3 positions are modified to phosphoserine: Ser112, Ser118, and Ser120.

It belongs to the eukaryotic ribosomal protein eL22 family.

This is Ribosomal protein eL22-like (RPL22L1) from Homo sapiens (Human).